The sequence spans 246 residues: MTQTFADQKRKTVETAEFTEDGRYKRKVRSFVLRTGRLSEFQRNMMNDNWGTLGLDYQTEPFDFAKIYGNDNPVVLEIGFGMGKSLVDMAFANPDKNYLGIEVHTPGVGACIAYAVEKGVTNLRVICHDATEILRDSIADGALGGLQLFFPDPWHKAKHHKRRIVQPHFVTQVIQKLGENGFIHMATDWENYAEQMLEVLSANTDLVNTSKNGDYIPRPDFRPLTKFEARGYKLGHGVWDLYFVKK.

S-adenosyl-L-methionine contacts are provided by E77, E102, D129, and D152. D152 is a catalytic residue. Substrate is bound by residues K156, D188, and 225-228 (TKFE).

It belongs to the class I-like SAM-binding methyltransferase superfamily. TrmB family.

It catalyses the reaction guanosine(46) in tRNA + S-adenosyl-L-methionine = N(7)-methylguanosine(46) in tRNA + S-adenosyl-L-homocysteine. Its pathway is tRNA modification; N(7)-methylguanine-tRNA biosynthesis. In terms of biological role, catalyzes the formation of N(7)-methylguanine at position 46 (m7G46) in tRNA. The sequence is that of tRNA (guanine-N(7)-)-methyltransferase from Haemophilus influenzae (strain ATCC 51907 / DSM 11121 / KW20 / Rd).